Here is a 151-residue protein sequence, read N- to C-terminus: Large ribosomal subunit protein bL9 (151 aa).

Belongs to the bacterial ribosomal protein bL9 family.

Its function is as follows. Binds to the 23S rRNA. The polypeptide is Large ribosomal subunit protein bL9 (Lactobacillus helveticus (strain DPC 4571)).